The sequence spans 79 residues: Conotoxin LiCr173 (79 aa).

An N-terminal signal peptide occupies residues 1–20 (MSGLGTMVLTLLLLVFMVTS). The propeptide occupies 21-46 (HQDGGKKQATQRNAVNIRRRKSITQR). 3 cysteine pairs are disulfide-bonded: cysteine 52/cysteine 64, cysteine 56/cysteine 73, and cysteine 63/cysteine 77. Position 78 is a phenylalanine amide (phenylalanine 78).

It belongs to the conotoxin O3 superfamily. As to expression, expressed by the venom duct.

The protein resides in the secreted. In Conus lividus (Livid cone), this protein is Conotoxin LiCr173.